A 389-amino-acid chain; its full sequence is Lipopolysaccharide assembly protein B (389 aa).

A helical transmembrane segment spans residues 1-20 (MLELLFLLLPVAAAYGWYMG). The Cytoplasmic portion of the chain corresponds to 21 to 389 (RRSAQQNKQD…IKPIRGLDGL (369 aa)). TPR repeat units lie at residues 35 to 68 (LSRDYVAGVNFLLSNQQDKAVDLFLDMLKEDTGT), 69 to 102 (VEAHLTLGNLFRSRGEVDRAIRIHQTLMESASLT), 107 to 140 (LLAIQQLGRDYMAAGLYDRAEDMFNQLTDETDFR), 142 to 174 (GALQQLLQIYQATSEWQKAIDVAERLVKLGKDK), 180 to 213 (AHFYCELALQHMASDDLDRAMTLLKKGAAADKNS), 214 to 247 (ARVSIMMGRVFMAKGEYAKAVESLQRVISQDREL), and 249 to 282 (SETLEMLQTCYQQLGKTAEWAEFLQRAVEENTGA). Fe cation contacts are provided by Cys357, Cys360, Cys371, and Cys374.

This sequence belongs to the LapB family.

It localises to the cell inner membrane. Modulates cellular lipopolysaccharide (LPS) levels by regulating LpxC, which is involved in lipid A biosynthesis. May act by modulating the proteolytic activity of FtsH towards LpxC. May also coordinate assembly of proteins involved in LPS synthesis at the plasma membrane. The chain is Lipopolysaccharide assembly protein B from Escherichia coli O157:H7.